A 126-amino-acid chain; its full sequence is Holo-[acyl-carrier-protein] synthase (126 aa).

Mg(2+) is bound by residues aspartate 9 and glutamate 58.

This sequence belongs to the P-Pant transferase superfamily. AcpS family. Mg(2+) serves as cofactor.

It is found in the cytoplasm. The catalysed reaction is apo-[ACP] + CoA = holo-[ACP] + adenosine 3',5'-bisphosphate + H(+). Functionally, transfers the 4'-phosphopantetheine moiety from coenzyme A to a Ser of acyl-carrier-protein. The chain is Holo-[acyl-carrier-protein] synthase from Aliivibrio salmonicida (strain LFI1238) (Vibrio salmonicida (strain LFI1238)).